The chain runs to 62 residues: MARCRRHSRSRSRSRNQCQRRRRRRYNRRRTYRRSRRHSRRRRGRRRGCSRRRYSRRGRRRY.

Residues 1–62 (MARCRRHSRS…RYSRRGRRRY (62 aa)) form a disordered region.

This sequence belongs to the protamine P1 family. In terms of tissue distribution, testis.

Its subcellular location is the nucleus. It is found in the chromosome. In terms of biological role, protamines substitute for histones in the chromatin of sperm during the haploid phase of spermatogenesis. They compact sperm DNA into a highly condensed, stable and inactive complex. This is Sperm protamine P1 (PRM1) from Planigale maculata sinualis (Common planigale).